We begin with the raw amino-acid sequence, 125 residues long: Snaclec VP12 subunit B (125 aa).

Cystine bridges form between Cys4/Cys15, Cys32/Cys121, and Cys98/Cys113. The 112-residue stretch at 11-122 folds into the C-type lectin domain; the sequence is FEKYCYKVFQ…CNDPRYFVCK (112 aa).

Belongs to the snaclec family. Heterodimer of subunits alpha and beta; disulfide-linked. In terms of tissue distribution, expressed by the venom gland.

Its subcellular location is the secreted. Functionally, inhibits integrin alpha-2/beta-1- (ITGA2/ITGB1) dependent melanoma metastasis. In Daboia palaestinae (Palestine viper), this protein is Snaclec VP12 subunit B.